The sequence spans 211 residues: Endonuclease YncB (211 aa).

The signal sequence occupies residues 1 to 19 (MKKILISMIAIVLSITLAA). A lipid anchor (N-palmitoyl cysteine) is attached at C20. C20 is lipidated: S-diacylglycerol cysteine. Positions 24-63 (HAAKNHSDSNGTEQVSQDTHSNEYNQTEQKAGTPHSKNQK) are disordered. Residues 31 to 53 (DSNGTEQVSQDTHSNEYNQTEQK) show a composition bias toward polar residues. A TNase-like domain is found at 64–197 (KLVNVTLDRA…KSDKLSIWSK (134 aa)). D77 serves as a coordination point for Ca(2+). The active site involves R91. Ca(2+) is bound by residues D96 and T97. Residues E99 and R142 contribute to the active site.

The protein belongs to the thermonuclease family. The cofactor is Ca(2+).

It localises to the cell membrane. Inhibited by aurintricalboxylic acid but not by Zn(2+). Its function is as follows. Shows DNase activity on double strand DNA. This Bacillus subtilis (strain 168) protein is Endonuclease YncB (yncB).